We begin with the raw amino-acid sequence, 299 residues long: 33 kDa chaperonin (299 aa).

Disulfide bonds link Cys234-Cys236 and Cys268-Cys271.

This sequence belongs to the HSP33 family. Post-translationally, under oxidizing conditions two disulfide bonds are formed involving the reactive cysteines. Under reducing conditions zinc is bound to the reactive cysteines and the protein is inactive.

It localises to the cytoplasm. Functionally, redox regulated molecular chaperone. Protects both thermally unfolding and oxidatively damaged proteins from irreversible aggregation. Plays an important role in the bacterial defense system toward oxidative stress. This Pseudomonas putida (strain ATCC 47054 / DSM 6125 / CFBP 8728 / NCIMB 11950 / KT2440) protein is 33 kDa chaperonin.